We begin with the raw amino-acid sequence, 342 residues long: Paired box protein Pax-9 (342 aa).

A DNA-binding region (paired) is located at residues 4 to 130 (AFGEVNQLGG…SSISRILRNK (127 aa)). Residues 7–63 (EVNQLGGVFVNGRPLPNAIRLRIVELAQLGIRPCDISRQLRVSHGCVSKILARYNET) form a PAI subdomain region. The RED subdomain stretch occupies residues 82–130 (TVVKHIRTYKQRDPGIFAWEIRDRLLADGVCDKYNVPSVSSISRILRNK). The interaction with KDM5B stretch occupies residues 168-189 (AAAAKVPTPPGVPAIPGSVALP).

In terms of assembly, interacts with KDM5B.

Its subcellular location is the nucleus. Transcription factor required for normal development of thymus, parathyroid glands, ultimobranchial bodies, teeth, skeletal elements of skull and larynx as well as distal limbs. This Rattus norvegicus (Rat) protein is Paired box protein Pax-9.